The primary structure comprises 357 residues: MIPNPVRAVIIDDSLLVRNIISDQIQKDSKIHVVATGKTGMDCIDLAQKMNPDVIILDVEMPVMDGLTALHELQKKKLGIPVIMLSVLTQNGAEATFKALEYGAIDFVPKPSSVFQFDPEEIGNILKSKILAYFESKIQIPSQNLLKKAPAYSKVPAGSHLKKSPIQAICIGTSTGGPRALQEVFSRIPADISLPILVVQHMPAGFTKAFATRLNDHAKIKVKEAEDGEPIEPNTGYVAPGDAHLSIQSKGGRKWIALNREAPVNGHRPSIEVLLDSAIEEYKSGIIGVIMTGMGKDGSAAIVRVREIGGSTIAQDEQTSVIYGMNRQAVEMGGVEYIEPVTEIINRIQIILKERGI.

In terms of domain architecture, Response regulatory spans 7 to 125 (RAVIIDDSLL…QFDPEEIGNI (119 aa)). D58 is modified (4-aspartylphosphate). The 183-residue stretch at 162–344 (KKSPIQAICI…VEYIEPVTEI (183 aa)) folds into the CheB-type methylesterase domain. Catalysis depends on residues S174, H201, and D297.

The protein belongs to the CheB family. In terms of processing, phosphorylated by CheA. Phosphorylation of the N-terminal regulatory domain activates the methylesterase activity.

It is found in the cytoplasm. It catalyses the reaction [protein]-L-glutamate 5-O-methyl ester + H2O = L-glutamyl-[protein] + methanol + H(+). The catalysed reaction is L-glutaminyl-[protein] + H2O = L-glutamyl-[protein] + NH4(+). In terms of biological role, involved in chemotaxis. Part of a chemotaxis signal transduction system that modulates chemotaxis in response to various stimuli. Catalyzes the demethylation of specific methylglutamate residues introduced into the chemoreceptors (methyl-accepting chemotaxis proteins or MCP) by CheR. Also mediates the irreversible deamidation of specific glutamine residues to glutamic acid. The polypeptide is Protein-glutamate methylesterase/protein-glutamine glutaminase 1 (Leptospira interrogans serogroup Icterohaemorrhagiae serovar Lai (strain 56601)).